Consider the following 230-residue polypeptide: MSFSNYKVIAMPVLVANFVLGAATAWANENYPAKSAGYNQGDWVASFNFSKVYVGEELGDLNVGGGALPNADVSIGNDTTLTFDIAYFVSSNIAVDFFVGVPARAKFQGEKSISSLGRVSEVDYGPAILSLQYHYDSFERLYPYVGVGVGRVLFFDKTDGALSSFDIKDKWAPAFQVGLRYDLGNSWMLNSDVRYIPFKTDVTGTLGPVPVSTKIEVDPFILSLGASYVF.

A signal peptide spans 1-27 (MSFSNYKVIAMPVLVANFVLGAATAWA).

Belongs to the OmpW/AlkL family.

It is found in the cell outer membrane. Functionally, could be involved in the transport of substrates. The protein is Outer membrane protein AlkL (alkL) of Ectopseudomonas oleovorans (Pseudomonas oleovorans).